A 253-amino-acid polypeptide reads, in one-letter code: uncharacterized protein (253 aa).

The first 25 residues, 1 to 25 (MRKKKFLSKVSFGSLFLLCGTVLSA), serve as a signal peptide directing secretion. Residue Cys-26 is the site of N-palmitoyl cysteine attachment. Cys-26 carries S-diacylglycerol cysteine lipidation.

The protein belongs to the MG439/MG440 family.

The protein localises to the cell membrane. This is an uncharacterized protein from Mycoplasma pneumoniae (strain ATCC 29342 / M129 / Subtype 1) (Mycoplasmoides pneumoniae).